The chain runs to 341 residues: MSLSFKNIVFPEEWQVPPNDYIFIDDCYEEALQFNLFERGDEKSYTWMYHTISCCAYFWCKCSRSEMKLIGHLMLWTFLLDDILDSDKVNDAEAIEMIKRTEFIFIEGKLPENPTDLEKYTCYLRNEGLKIAGDREDMFNMFLTNSIQWILSIIPLNKSMEHKLPPHLQLHGYLRKLNVGVELCQGFTYLIFANNKVNPAIFNSPRYKKMLECTSMVVSHVNDMASYCKEVKNGGGFINSLLILQKRADPLSIEHSYQVIAEQTNAFIRDFIYQEKMLLESISDEQQNEVKVFLDHMKYLMKGNYLWSGTTARYASKSSPFVEMQKSLNVHLDNEIDASSL.

The short motif at 81 to 86 is the DDxx(x)D/E motif element; the sequence is DDILDS. The NDxxSxxxD/E motif motif lies at 222–230; it reads NDMASYCKE.

It belongs to the terpene synthase family.

The catalysed reaction is (2E,6E)-farnesyl diphosphate = (1S,2S,4R)-beta-elemene + diphosphate. It carries out the reaction (2E,6E)-farnesyl diphosphate = germacrene D + diphosphate. In terms of biological role, terpene synthase that converts its substrate farnesyl diphosphate (FPP) into the sesquiterpenes beta-elemene, germacrene D and a yet unidentified sesquiterpene. This is Terpene synthase 9 from Dictyostelium purpureum (Slime mold).